The primary structure comprises 296 residues: Protein TIC 21, chloroplastic (296 aa).

Residues 1 to 90 constitute a chloroplast transit peptide; the sequence is MQSLLLPPAS…VAFSYPTSPS (90 aa). A run of 4 helical transmembrane segments spans residues 125–145, 156–176, 208–228, and 250–270; these read FWGQLVSTVVAAVILSFSIVV, YATASGIAAAFVSVFWSFGYI, VNILGMGSALLGMQATVGFLV, and VLALDVFLVQASANTLLSHFL.

As to quaternary structure, homomultimer. Part of the translocon complex. In terms of tissue distribution, ubiquitous. Highest expression in green tissues and very low levels in mature pollen.

The protein localises to the plastid. It is found in the chloroplast inner membrane. In terms of biological role, involved in chloroplast protein import across the inner envelope membrane. Also acts as a chloroplast permease regulating the iron transport and homeostasis. Involved in the uptake and sequestration of iron in plastids. The sequence is that of Protein TIC 21, chloroplastic (TIC21) from Arabidopsis thaliana (Mouse-ear cress).